Consider the following 463-residue polypeptide: Glutamate--tRNA ligase 2 (463 aa).

Positions 10–20 (PSPTGYLHIGG) match the 'HIGH' region motif. A 'KMSKS' region motif is present at residues 238-242 (KLSKR). Lys241 provides a ligand contact to ATP.

It belongs to the class-I aminoacyl-tRNA synthetase family. Glutamate--tRNA ligase type 1 subfamily. As to quaternary structure, monomer.

It localises to the cytoplasm. It carries out the reaction tRNA(Glu) + L-glutamate + ATP = L-glutamyl-tRNA(Glu) + AMP + diphosphate. Functionally, catalyzes the attachment of glutamate to tRNA(Glu) in a two-step reaction: glutamate is first activated by ATP to form Glu-AMP and then transferred to the acceptor end of tRNA(Glu). The chain is Glutamate--tRNA ligase 2 from Helicobacter acinonychis (strain Sheeba).